A 313-amino-acid chain; its full sequence is MGSQNQGSTTTTSAGNPDSLVTDKVDQKGQVQTSGQNLSDTNYTNLSPNFTPTSDWPNALSFTNKNNAQRAQLFLHGLLGSIPVLVNKSGENNEKFQATDQKWSYTELKSDQTKLNLPAYGEVNGLLNPALVETYFGTTRTSSTANQNSTTVPGIGFKIPEQNNDSKAVLITPGLAWTPQDVGNLVVSGTSFSFQLGGWLVSFTDFVKPRAGYLGLQLTGLDASDATQRALIWAPPALSGLSWQLGQPVGPRGECVGFEGGVGGSSSVRLARIYHHRNRGYLTGAPECFGLSGECGGSECLQAKHELRPNPIH.

Positions 1 to 16 (MGSQNQGSTTTTSAGN) are enriched in low complexity. A disordered region spans residues 1–44 (MGSQNQGSTTTTSAGNPDSLVTDKVDQKGQVQTSGQNLSDTNYT). Over residues 29–44 (GQVQTSGQNLSDTNYT) the composition is skewed to polar residues.

It belongs to the adhesin P1 family.

The sequence is that of Putative adhesin P1-like protein MPN_202 from Mycoplasma pneumoniae (strain ATCC 29342 / M129 / Subtype 1) (Mycoplasmoides pneumoniae).